A 162-amino-acid polypeptide reads, in one-letter code: Small ribosomal subunit protein uS13 (162 aa).

Residues 142–162 (RGQRTKSTGRRGSTVGVSRKK) form a disordered region.

The protein belongs to the universal ribosomal protein uS13 family. Part of the 30S ribosomal subunit. Forms a loose heterodimer with protein S19. Forms two bridges to the 50S subunit in the 70S ribosome.

In terms of biological role, located at the top of the head of the 30S subunit, it contacts several helices of the 16S rRNA. In the 70S ribosome it contacts the 23S rRNA (bridge B1a) and protein L5 of the 50S subunit (bridge B1b), connecting the 2 subunits; these bridges are implicated in subunit movement. The chain is Small ribosomal subunit protein uS13 from Methanosarcina acetivorans (strain ATCC 35395 / DSM 2834 / JCM 12185 / C2A).